A 336-amino-acid chain; its full sequence is GTPase Obg (336 aa).

One can recognise an Obg domain in the interval 1–159; sequence MKFIDEATII…RRLQLELILL (159 aa). In terms of domain architecture, OBG-type G spans 160–333; that stretch reads ADVGLLGLPN…LCRDIMLFIN (174 aa). GTP contacts are provided by residues 166 to 173, 191 to 195, 213 to 216, 283 to 286, and 314 to 316; these read GLPNVGKS, FTTLV, DIPG, NKLD, and SAM. The Mg(2+) site is built by Ser-173 and Thr-193.

The protein belongs to the TRAFAC class OBG-HflX-like GTPase superfamily. OBG GTPase family. Monomer. The cofactor is Mg(2+).

It is found in the cytoplasm. In terms of biological role, an essential GTPase which binds GTP, GDP and possibly (p)ppGpp with moderate affinity, with high nucleotide exchange rates and a fairly low GTP hydrolysis rate. Plays a role in control of the cell cycle, stress response, ribosome biogenesis and in those bacteria that undergo differentiation, in morphogenesis control. This chain is GTPase Obg, found in Baumannia cicadellinicola subsp. Homalodisca coagulata.